The chain runs to 336 residues: Phospho-N-acetylmuramoyl-pentapeptide-transferase (336 aa).

Helical transmembrane passes span 1-21 (MLPL…SLFL), 56-76 (IPTA…LLLF), 78-98 (IQLW…ALGW), 124-144 (CLAA…FLSF), 148-168 (FLGI…FAIA), 184-204 (GLDG…LVVA), 210-230 (PWAF…LGFL), 239-259 (VFMG…CAVL), 264-284 (FLLL…IVQV), and 314-334 (VVRN…IAVF).

The protein belongs to the glycosyltransferase 4 family. MraY subfamily. It depends on Mg(2+) as a cofactor.

It localises to the cell inner membrane. It carries out the reaction UDP-N-acetyl-alpha-D-muramoyl-L-alanyl-gamma-D-glutamyl-meso-2,6-diaminopimeloyl-D-alanyl-D-alanine + di-trans,octa-cis-undecaprenyl phosphate = di-trans,octa-cis-undecaprenyl diphospho-N-acetyl-alpha-D-muramoyl-L-alanyl-D-glutamyl-meso-2,6-diaminopimeloyl-D-alanyl-D-alanine + UMP. It participates in cell wall biogenesis; peptidoglycan biosynthesis. Functionally, catalyzes the initial step of the lipid cycle reactions in the biosynthesis of the cell wall peptidoglycan: transfers peptidoglycan precursor phospho-MurNAc-pentapeptide from UDP-MurNAc-pentapeptide onto the lipid carrier undecaprenyl phosphate, yielding undecaprenyl-pyrophosphoryl-MurNAc-pentapeptide, known as lipid I. The chain is Phospho-N-acetylmuramoyl-pentapeptide-transferase from Chlamydia trachomatis serovar L2b (strain UCH-1/proctitis).